The following is a 99-amino-acid chain: Aspartyl/glutamyl-tRNA(Asn/Gln) amidotransferase subunit C (99 aa).

The protein belongs to the GatC family. As to quaternary structure, heterotrimer of A, B and C subunits.

The catalysed reaction is L-glutamyl-tRNA(Gln) + L-glutamine + ATP + H2O = L-glutaminyl-tRNA(Gln) + L-glutamate + ADP + phosphate + H(+). It carries out the reaction L-aspartyl-tRNA(Asn) + L-glutamine + ATP + H2O = L-asparaginyl-tRNA(Asn) + L-glutamate + ADP + phosphate + 2 H(+). Allows the formation of correctly charged Asn-tRNA(Asn) or Gln-tRNA(Gln) through the transamidation of misacylated Asp-tRNA(Asn) or Glu-tRNA(Gln) in organisms which lack either or both of asparaginyl-tRNA or glutaminyl-tRNA synthetases. The reaction takes place in the presence of glutamine and ATP through an activated phospho-Asp-tRNA(Asn) or phospho-Glu-tRNA(Gln). This is Aspartyl/glutamyl-tRNA(Asn/Gln) amidotransferase subunit C from Mycobacterium leprae (strain Br4923).